A 524-amino-acid polypeptide reads, in one-letter code: Sterol O-acyltransferase 2 (524 aa).

The tract at residues 1–31 (MEPKAPQLRRRERQGEEQENGACGEGNTRTH) is disordered. Residues 1 to 118 (MEPKAPQLRR…LDELMGVQHF (118 aa)) lie on the Cytoplasmic side of the membrane. His-117 contributes to the cholesterol binding site. Residues 119-140 (RTIYHMFIAGLCVLIISTLAID) form a helical membrane-spanning segment. Topologically, residues 141-160 (FIDEGRLMLEFDLLLFSFGQ) are lumenal. A helical membrane pass occupies residues 161–186 (LPLALMMWVPMFLSTLLLPYQTLRLW). Over 187 to 198 (ARPRSGGAWTLG) the chain is Cytoplasmic. A helical transmembrane segment spans residues 199 to 222 (ASLGCVLLAAHAAVLCVLPVHVSV). Topologically, residues 223-230 (KHELPPAS) are lumenal. A helical transmembrane segment spans residues 231 to 254 (RCVLVFEQVRFLMKSYSFLRETVP). Residues 255–295 (GIFCVRGGKGICTPSFSSYLYFLFCPTLIYRETYPRTPSIR) are Cytoplasmic-facing. Cysteine sulfenic acid (-SOH); alternate is present on Cys-279. A Glycyl cysteine thioester (Cys-Gly) (interchain with G-Cter in ubiquitin); alternate cross-link involves residue Cys-279. The helical transmembrane segment at 296-328 (WNYVAKNFAQALGCLLYACFILGRLCVPVFANM) threads the bilayer. At 329–345 (SREPFSTRALLLSILHA) the chain is on the lumenal side. Residues 346–371 (TGPGIFMLLLIFFAFLHCWLNAFAEM) form a helical membrane-spanning segment. Topologically, residues 372–419 (LRFGDRMFYRDWWNSTSFSNYYRTWNVVVHDWLYSYVYQDGLWLLGRQ) are cytoplasmic. The FYXDWWN motif signature appears at 379–385 (FYRDWWN). The an acyl-CoA site is built by Asn-391, Arg-394, Asn-397, His-401, Tyr-409, and Ser-432. A helical membrane pass occupies residues 420 to 444 (GRGAAMLGVFLVSALVHEYIFCFVL). Residue His-436 is part of the active site. Residues 445–450 (GFFYPV) are Lumenal-facing. The helical transmembrane segment at 451–466 (MLILFLVVGGLLNFTM) threads the bilayer. Over 467–472 (NDRHTG) the chain is Cytoplasmic. The chain crosses the membrane as a helical span at residues 473–504 (PAWNILMWTFLFLGQGIQVSLYCQEWYARRHC). At 505 to 524 (PLPQPTFWELVTPRSWSCHP) the chain is on the lumenal side.

Belongs to the membrane-bound acyltransferase family. Sterol o-acyltransferase subfamily. May form homo- or heterodimers. Interacts with INSIG1; the interaction is direct and promotes association with AMFR/gp78. In terms of processing, polyubiquitinated by AMFR/gp78 at Cys-279, leading to its degradation when the lipid levels are low. Association with AMFR/gp78 is mediated via interaction with INSIG1. High concentration of cholesterol and fatty acid results in Cys-279 oxidation, preventing ubiquitination at the same site, resulting in protein stabilization. Post-translationally, oxidized at Cys-279: high concentration of cholesterol and fatty acid induce reactive oxygen species, which oxidizes Cys-279, preventing ubiquitination at the same site, and resulting in protein stabilization.

The protein localises to the endoplasmic reticulum membrane. It carries out the reaction a sterol + a long-chain fatty acyl-CoA = a long-chain 3-hydroxysterol ester + CoA. It catalyses the reaction cholesterol + an acyl-CoA = a cholesterol ester + CoA. The catalysed reaction is cholesterol + (9Z)-octadecenoyl-CoA = cholesteryl (9Z-octadecenoate) + CoA. The enzyme catalyses (5Z,8Z,11Z,14Z,17Z)-eicosapentaenoyl-CoA + cholesterol = (5Z,8Z,11Z,14Z,17Z-eicosapentaenoyl)-cholesterol + CoA. It carries out the reaction (9Z,12Z,15Z)-octadecatrienoyl-CoA + cholesterol = (9Z,12Z,15Z-octadecatrienoyl)-cholesterol + CoA. It catalyses the reaction (5Z,8Z,11Z,14Z)-eicosatetraenoyl-CoA + cholesterol = cholesteryl (5Z,8Z,11Z,14Z)-eicosatetraenoate + CoA. Functionally, catalyzes the formation of fatty acid-cholesterol esters, which are less soluble in membranes than cholesterol. Plays a role in lipoprotein assembly and dietary cholesterol absorption. Utilizes oleoyl-CoA ((9Z)-octadecenoyl-CoA) and linolenoyl-CoA ((9Z,12Z,15Z)-octadecatrienoyl-CoA) as substrates. May provide cholesteryl esters for lipoprotein secretion from hepatocytes and intestinal mucosa. The chain is Sterol O-acyltransferase 2 from Rattus norvegicus (Rat).